The sequence spans 89 residues: Large ribosomal subunit protein bL27 (89 aa).

The tract at residues 1-21 (MAHKKAGGSSRNGRDSAGRRL) is disordered.

The protein belongs to the bacterial ribosomal protein bL27 family.

This chain is Large ribosomal subunit protein bL27, found in Erythrobacter litoralis (strain HTCC2594).